A 126-amino-acid chain; its full sequence is Glycine cleavage system H protein (126 aa).

The Lipoyl-binding domain maps to 24–105; it reads TLTVGITDHA…AYGVWLFKLK (82 aa). The residue at position 65 (Lys65) is an N6-lipoyllysine.

It belongs to the GcvH family. As to quaternary structure, the glycine cleavage system is composed of four proteins: P, T, L and H. (R)-lipoate is required as a cofactor.

Its function is as follows. The glycine cleavage system catalyzes the degradation of glycine. The H protein shuttles the methylamine group of glycine from the P protein to the T protein. This chain is Glycine cleavage system H protein, found in Burkholderia vietnamiensis (strain G4 / LMG 22486) (Burkholderia cepacia (strain R1808)).